A 297-amino-acid polypeptide reads, in one-letter code: Tyrosine recombinase XerC (297 aa).

The Core-binding (CB) domain maps to 1-84 (MEEIQVTFLN…TLRTFYEFWM (84 aa)). The Tyr recombinase domain occupies 105–286 (YLPQFFYEEE…SNQQLRKVYL (182 aa)). Active-site residues include Arg-145, Lys-169, His-238, Arg-241, and His-264. Tyr-273 functions as the O-(3'-phospho-DNA)-tyrosine intermediate in the catalytic mechanism.

Belongs to the 'phage' integrase family. XerC subfamily. Forms a cyclic heterotetrameric complex composed of two molecules of XerC and two molecules of XerD.

The protein localises to the cytoplasm. Functionally, site-specific tyrosine recombinase, which acts by catalyzing the cutting and rejoining of the recombining DNA molecules. The XerC-XerD complex is essential to convert dimers of the bacterial chromosome into monomers to permit their segregation at cell division. It also contributes to the segregational stability of plasmids. The chain is Tyrosine recombinase XerC from Staphylococcus haemolyticus (strain JCSC1435).